We begin with the raw amino-acid sequence, 178 residues long: ATP synthase subunit delta (178 aa).

This sequence belongs to the ATPase delta chain family. As to quaternary structure, F-type ATPases have 2 components, F(1) - the catalytic core - and F(0) - the membrane proton channel. F(1) has five subunits: alpha(3), beta(3), gamma(1), delta(1), epsilon(1). F(0) has three main subunits: a(1), b(2) and c(10-14). The alpha and beta chains form an alternating ring which encloses part of the gamma chain. F(1) is attached to F(0) by a central stalk formed by the gamma and epsilon chains, while a peripheral stalk is formed by the delta and b chains.

Its subcellular location is the cell membrane. F(1)F(0) ATP synthase produces ATP from ADP in the presence of a proton or sodium gradient. F-type ATPases consist of two structural domains, F(1) containing the extramembraneous catalytic core and F(0) containing the membrane proton channel, linked together by a central stalk and a peripheral stalk. During catalysis, ATP synthesis in the catalytic domain of F(1) is coupled via a rotary mechanism of the central stalk subunits to proton translocation. In terms of biological role, this protein is part of the stalk that links CF(0) to CF(1). It either transmits conformational changes from CF(0) to CF(1) or is implicated in proton conduction. In Acetivibrio thermocellus (strain ATCC 27405 / DSM 1237 / JCM 9322 / NBRC 103400 / NCIMB 10682 / NRRL B-4536 / VPI 7372) (Clostridium thermocellum), this protein is ATP synthase subunit delta.